A 405-amino-acid polypeptide reads, in one-letter code: MAASGKTSKSASNHVIFKKISRDKSVTIYLGKRDYIDHVEQVEPVDGIVLVDPELVKGKKVYVSLTCAFRYGQEDIDVIGLSFRRDLYFSQVQVFPPVEAAGAPTKLQESLMKKLGGNTYPFLLTFPDYLPCSVMLQPAPQDMGKCCGVDFEVKAFARDSTEDEEDKVPKKSSVRLLIRKVQHAPSKMGPQPRAEAAWQFFMSDKPLHLAVSLSKEIYFHGEPITVTVTVTNNTEKTVKKIKALVEQVANVVLYSSDYYTKPVAQEETQEKVPPNSTLTTTLTLVPLLANNRERRGIALDGKIKHEDTNLASSTIIKEGIDRTVLGILVSYHIKVKLTVSGFLGELTSSEVATEVPFRLMHPQPEDPATAKESFQDANLVFEEFARQNLKDFAEEGKKDREAMDE.

Thr-234 is modified (phosphothreonine).

Belongs to the arrestin family. In terms of assembly, monomer. Homodimer. Homotetramer. Interacts with RHO (via the phosphorylated C-terminus).

The protein resides in the cell projection. It is found in the cilium. The protein localises to the photoreceptor outer segment. Its subcellular location is the membrane. In terms of biological role, binds to photoactivated, phosphorylated RHO and terminates RHO signaling via G-proteins by competing with G-proteins for the same binding site on RHO. May play a role in preventing light-dependent degeneration of retinal photoreceptor cells. The polypeptide is S-arrestin (SAG) (Canis lupus familiaris (Dog)).